Consider the following 72-residue polypeptide: Translation initiation factor IF-1 (72 aa).

Residues 1 to 72 (MAKEDVIEVE…TRGRITYRFK (72 aa)) form the S1-like domain.

Belongs to the IF-1 family. In terms of assembly, component of the 30S ribosomal translation pre-initiation complex which assembles on the 30S ribosome in the order IF-2 and IF-3, IF-1 and N-formylmethionyl-tRNA(fMet); mRNA recruitment can occur at any time during PIC assembly.

It is found in the cytoplasm. In terms of biological role, one of the essential components for the initiation of protein synthesis. Stabilizes the binding of IF-2 and IF-3 on the 30S subunit to which N-formylmethionyl-tRNA(fMet) subsequently binds. Helps modulate mRNA selection, yielding the 30S pre-initiation complex (PIC). Upon addition of the 50S ribosomal subunit IF-1, IF-2 and IF-3 are released leaving the mature 70S translation initiation complex. The sequence is that of Translation initiation factor IF-1 from Listeria innocua serovar 6a (strain ATCC BAA-680 / CLIP 11262).